The following is a 619-amino-acid chain: 4-hydroxyphenylalkanoate adenylyltransferase (619 aa).

Belongs to the ATP-dependent AMP-binding enzyme family.

The catalysed reaction is 17-(4-hydroxyphenyl)heptadecanoate + holo-[(phenol)carboxyphthiodiolenone synthase] + ATP = 17-(4-hydroxyphenyl)heptadecanoyl-[(phenol)carboxyphthiodiolenone synthase] + AMP + diphosphate. It carries out the reaction 19-(4-hydroxyphenyl)nonadecanoate + holo-[(phenol)carboxyphthiodiolenone synthase] + ATP = 19-(4-hydroxyphenyl)nonadecanoyl-[(phenol)carboxyphthiodiolenone synthase] + AMP + diphosphate. It catalyses the reaction dodecanoate + ATP + H(+) = dodecanoyl-AMP + diphosphate. It participates in lipid metabolism; fatty acid biosynthesis. Its function is as follows. Catalyzes the activation of long-chain fatty acids as acyl-adenylates (acyl-AMP), which are then transferred to the multifunctional polyketide synthase PpsA for further chain extension. Involved in the biosynthesis of phenolphthiocerol, which is an important intermediate in the biosynthesis of phenolic glycolipid (PGL), also called mycosid B. The protein is 4-hydroxyphenylalkanoate adenylyltransferase (fadD29) of Mycobacterium tuberculosis (strain ATCC 25618 / H37Rv).